The chain runs to 302 residues: Cell division protein FtsQ (302 aa).

At 1–43 the chain is on the cytoplasmic side; the sequence is MRPVDKKPVDRKIERETRYLRRDPAPSRWSYRYQRLMLTPAFR. The chain crosses the membrane as a helical span at residues 44 to 64; that stretch reads AGVRLGTPVIIIALAVAVVFG. Over 65–302 the chain is Periplasmic; it reads RADSRDWIMG…SMPGRSAGRG (238 aa). The POTRA domain maps to 89-156; that stretch reads FMVGSFAITG…GVLQIVIEER (68 aa).

Belongs to the FtsQ/DivIB family. FtsQ subfamily.

It is found in the cell inner membrane. Its function is as follows. Essential cell division protein. The sequence is that of Cell division protein FtsQ from Ketogulonicigenium vulgare (strain Y25).